The chain runs to 70 residues: DNA-directed RNA polymerase subunit epsilon (70 aa).

The protein belongs to the RNA polymerase subunit epsilon family. In terms of assembly, RNAP is composed of a core of 2 alpha, a beta and a beta' subunit. The core is associated with a delta subunit, and at least one of epsilon or omega. When a sigma factor is associated with the core the holoenzyme is formed, which can initiate transcription.

It catalyses the reaction RNA(n) + a ribonucleoside 5'-triphosphate = RNA(n+1) + diphosphate. A non-essential component of RNA polymerase (RNAP). This is DNA-directed RNA polymerase subunit epsilon from Bacillus cytotoxicus (strain DSM 22905 / CIP 110041 / 391-98 / NVH 391-98).